The primary structure comprises 271 residues: Sedoheptulose 1,7-bisphosphatase (271 aa).

Arg12 serves as a coordination point for substrate. The Tele-phosphohistidine intermediate role is filled by His13. Substrate is bound by residues 24–25 (YT), Arg69, 99–102 (EWEY), Arg181, and His244. Glu99 functions as the Proton donor/acceptor in the catalytic mechanism.

Belongs to the phosphoglycerate mutase family. SHB17 subfamily. Homodimer.

It is found in the cytoplasm. The protein localises to the nucleus. It carries out the reaction D-sedoheptulose 1,7-bisphosphate + H2O = D-sedoheptulose 7-phosphate + phosphate. Functionally, sedoheptulose 1,7-bisphosphatase involved in riboneogenesis. Dephosphorylates sedoheptulose 1,7-bisphosphate (SBP), which is converted via the non-oxidative pentose phosphate pathway to ribose-5-phosphate. Has a fructose 1,6-bisphosphatase activity in vitro, but this is probably not biologically relevant, since deletion does not affect fructose 1,6-biphosphate (FBP) levels. The polypeptide is Sedoheptulose 1,7-bisphosphatase (SHB17) (Saccharomyces cerevisiae (strain ATCC 204508 / S288c) (Baker's yeast)).